Here is a 252-residue protein sequence, read N- to C-terminus: Probable endonuclease 4 (252 aa).

Positions 56, 96, 129, 162, 165, 191, 204, 206, and 233 each coordinate Zn(2+).

The protein belongs to the AP endonuclease 2 family. Zn(2+) serves as cofactor.

The enzyme catalyses Endonucleolytic cleavage to 5'-phosphooligonucleotide end-products.. Its function is as follows. Endonuclease IV plays a role in DNA repair. It cleaves phosphodiester bonds at apurinic or apyrimidinic (AP) sites, generating a 3'-hydroxyl group and a 5'-terminal sugar phosphate. The polypeptide is Probable endonuclease 4 (Mycobacterium tuberculosis (strain ATCC 25177 / H37Ra)).